The sequence spans 478 residues: Divinyl ether synthase CYP74D3 (478 aa).

Heme is bound at residue Cys-432.

It belongs to the cytochrome P450 family. 9-divinyl ether synthase subfamily. As to expression, not detected in leaves, stems or roots of healthy plants.

It is found in the cytoplasm. Its subcellular location is the cytosol. It catalyses the reaction (9S)-hydroperoxy-(10E,12Z)-octadecadienoate = colneleate + H2O. The catalysed reaction is (9S)-hydroperoxy-(10E,12Z,15Z)-octadecatrienoate = colnelenate + H2O. In terms of biological role, strictly inducible cytochrome P450 involved in the biosynthesis of the anti-fungal toxins colneleate and colnelenate. Can use (9S)-hydroperoxy-(10E,12Z)-octadecadienoate (9-HPOD) and (9S)-hydroperoxy-(10E,12Z,15Z)-octadecatrienoate (9-HPOT) as substrates, but has a very low activity with the corresponding 13-hydroperoxides (13-HPOD and 13-POT). In Nicotiana tabacum (Common tobacco), this protein is Divinyl ether synthase CYP74D3.